The chain runs to 416 residues: Exodeoxyribonuclease 7 large subunit (416 aa).

The segment at 1–21 is disordered; sequence MTEPDSKPKKGRAGRKKAEPV.

Belongs to the XseA family. Heterooligomer composed of large and small subunits.

It is found in the cytoplasm. It catalyses the reaction Exonucleolytic cleavage in either 5'- to 3'- or 3'- to 5'-direction to yield nucleoside 5'-phosphates.. Bidirectionally degrades single-stranded DNA into large acid-insoluble oligonucleotides, which are then degraded further into small acid-soluble oligonucleotides. The sequence is that of Exodeoxyribonuclease 7 large subunit from Deinococcus radiodurans (strain ATCC 13939 / DSM 20539 / JCM 16871 / CCUG 27074 / LMG 4051 / NBRC 15346 / NCIMB 9279 / VKM B-1422 / R1).